The sequence spans 438 residues: Putative F-box protein At5g15660 (438 aa).

The segment at M1–K24 is disordered. One can recognise an F-box domain in the interval R22–Y68.

In Arabidopsis thaliana (Mouse-ear cress), this protein is Putative F-box protein At5g15660.